The sequence spans 139 residues: NAD(P) transhydrogenase subunit alpha part 2 (139 aa).

Helical transmembrane passes span 49 to 69 (FWWLMTVFVLACFIGFYVVWS), 78 to 98 (LMGVTNAISSVIVVGALIATG), and 107 to 127 (VLGFFAILLASVNIFGGFIVT).

In terms of assembly, complex of an alpha and a beta chain; in Rhodospirillum, the alpha chain seems to be made of two subunits.

The protein resides in the cell inner membrane. It carries out the reaction NAD(+) + NADPH + H(+)(in) = NADH + NADP(+) + H(+)(out). Functionally, the transhydrogenation between NADH and NADP is coupled to respiration and ATP hydrolysis and functions as a proton pump across the membrane. In Rhodospirillum rubrum (strain ATCC 11170 / ATH 1.1.1 / DSM 467 / LMG 4362 / NCIMB 8255 / S1), this protein is NAD(P) transhydrogenase subunit alpha part 2 (pntAB).